The following is a 240-amino-acid chain: Aspartate/glutamate leucyltransferase (240 aa).

Belongs to the R-transferase family. Bpt subfamily.

It is found in the cytoplasm. It catalyses the reaction N-terminal L-glutamyl-[protein] + L-leucyl-tRNA(Leu) = N-terminal L-leucyl-L-glutamyl-[protein] + tRNA(Leu) + H(+). It carries out the reaction N-terminal L-aspartyl-[protein] + L-leucyl-tRNA(Leu) = N-terminal L-leucyl-L-aspartyl-[protein] + tRNA(Leu) + H(+). Functions in the N-end rule pathway of protein degradation where it conjugates Leu from its aminoacyl-tRNA to the N-termini of proteins containing an N-terminal aspartate or glutamate. This chain is Aspartate/glutamate leucyltransferase, found in Gluconobacter oxydans (strain 621H) (Gluconobacter suboxydans).